The chain runs to 305 residues: MTLVRERRHQEPLTLSIPPLIYHGTAFSVASSSSSSPETSPIQTLNDLEKLSVLGQGSGGTVYKTRHRRTKTLYALKVLRPNLNTTVTVEADILKRIESSFIIKCYAVFVSLYDLCFVMELMEKGSLHDALLAQQVFSEPMVSSLANRILQGLRYLQKMGIVHGDIKPSNLLINKKGEVKIADFGASRIVAGGDYGSNGTCAYMSPERVDLEKWGFGGEVGFAGDVWSLGVVVLECYIGRYPLTKVGDKPDWATLFCAICCNEKVDIPVSCSLEFRDFVGRCLEKDWRKRDTVEELLRHSFVKNR.

Position 34 is a phosphoserine (S34). Residues 48–302 form the Protein kinase domain; that stretch reads LEKLSVLGQG…VEELLRHSFV (255 aa). ATP contacts are provided by residues 54-62 and K77; that span reads LGQGSGGTV. Catalysis depends on D165, which acts as the Proton acceptor. T200 bears the Phosphothreonine mark.

It belongs to the protein kinase superfamily. STE Ser/Thr protein kinase family. MAP kinase kinase subfamily. As to quaternary structure, interacts with P.syringae type III effector HopF2.

The enzyme catalyses L-seryl-[protein] + ATP = O-phospho-L-seryl-[protein] + ADP + H(+). It catalyses the reaction L-threonyl-[protein] + ATP = O-phospho-L-threonyl-[protein] + ADP + H(+). It carries out the reaction L-tyrosyl-[protein] + ATP = O-phospho-L-tyrosyl-[protein] + ADP + H(+). This chain is Mitogen-activated protein kinase kinase 10 (MKK10), found in Arabidopsis thaliana (Mouse-ear cress).